Reading from the N-terminus, the 624-residue chain is Kelch-like ECH-associated protein 1 (624 aa).

C38 bears the S-(2-succinyl)cysteine mark. One can recognise a BTB domain in the interval C77–E149. Residue R135 forms an N5-[4-(S-L-cysteinyl)-5-methyl-1H-imidazol-2-yl]-L-ornithine (Arg-Cys) (interchain with C-151 in KEAP1) linkage. An S-(2-succinyl)cysteine mark is found at C151 and C241. C151 is subject to S-(2,3-dicarboxypropyl)cysteine; alternate. An S-nitrosocysteine; alternate modification is found at C151. An N5-[4-(S-L-cysteinyl)-5-methyl-1H-imidazol-2-yl]-L-ornithine (Cys-Arg) (interchain with R-135 in KEAP1) cross-link involves residue C151. Residues A184 to Q286 form the BACK domain. S-(2,3-dicarboxypropyl)cysteine occurs at positions 257 and 273. S-(2-succinyl)cysteine occurs at positions 288 and 319. Residue C288 is modified to S-(2,3-dicarboxypropyl)cysteine; alternate. Kelch repeat units follow at residues L327–G372, L373–G423, H424–R470, L471–N517, C518–G564, and R565–E611. At C434 the chain carries S-cGMP-cysteine. The residue at position 613 (C613) is an S-(2-succinyl)cysteine.

It belongs to the KEAP1 family. As to quaternary structure, component of the BCR(KEAP1) E3 ubiquitin ligase complex, at least composed of 2 molecules of CUL3, 2 molecules of KEAP1, and RBX1. Interacts with NFE2L2/NRF2; the interaction is direct. Forms a ternary complex with NFE2L2/NRF2 and PGAM5. Interacts with (phosphorylated) SQSTM1/p62; the interaction is direct and inactivates the BCR(KEAP1) complex by sequestering it in inclusion bodies, promoting its degradation. Interacts with NFE2L1. Interacts with BPTF and PTMA. Interacts with MAP1LC3B. Interacts indirectly with ENC1. Interacts with SESN1 and SESN2. Interacts with HSP90AA1 and HSP90AB1. Interacts with PGCKA1; this interaction prevents the ubiquitination of KEAP1 by TRIM25, thus protecting KEAP1 from degradation. In terms of processing, non-enzymatic covalent modifications of reactive cysteines by electrophile metabolites inactivate the BCR(KEAP1) complex. Accumulation of fumarate promotes the formation of cysteine S-succination (S-(2-succinyl)cysteine), leading to inactivate the BCR(KEAP1) complex and promote NFE2L2/NRF2 nuclear accumulation and activation. Nitric oxide-dependent 8-Nitro-cGMP formation promotes cysteine guanylation (S-cGMP-cysteine), leading to NFE2L2/NRF2 nuclear accumulation and activation. Itaconate, an anti-inflammatory metabolite generated in response to lipopolysaccharide, alkylates cysteines, activating NFE2L2/NRF2. Methylglyoxal, a reactive metabolite that accumulates when the glycolytic enzyme PGK1 is inhibited, promotes formation of a methylimidazole cross-link between proximal Cys-151 and Arg-135 on another KEAP1 molecule, resulting in an inactive dimer that inactivates the BCR(KEAP1) complex. Degraded via a proteasomal-independent process during selective autophagy: interaction with phosphorylated SQSTM1/p62 sequesters KEAP1 in inclusion bodies, leading to its degradation. Post-translationally, auto-ubiquitinated by the BCR(KEAP1) complex. Quinone-induced oxidative stress, but not sulforaphane, increases its ubiquitination. Ubiquitination and subsequent degradation is most pronounced following prolonged exposure of cells to oxidative stress, particularly in glutathione-deficient cells that are highly susceptible to oxidative stress. Deubiquitinated by USP25; leading to stabilization. Ubiquitinated by TRIM25; leading to degradation upon ER stress.

The protein localises to the cytoplasm. It is found in the nucleus. It participates in protein modification; protein ubiquitination. With respect to regulation, ubiquitin ligase activity of the BCR(KEAP1) complex is inhibited by oxidative stress and electrophile metabolites such as sulforaphane. Electrophile metabolites react with reactive cysteine residues in KEAP1 and trigger non-enzymatic covalent modifications of these cysteine residues, leading to inactivate the ubiquitin ligase activity of the BCR(KEAP1) complex. Selective autophagy also inactivates the BCR(KEAP1) complex via interaction between KEAP1 and SQSTM1/p62, which sequesters the complex in inclusion bodies and promotes its degradation. In terms of biological role, substrate-specific adapter of a BCR (BTB-CUL3-RBX1) E3 ubiquitin ligase complex that regulates the response to oxidative stress by targeting NFE2L2/NRF2 for ubiquitination. KEAP1 acts as a key sensor of oxidative and electrophilic stress: in normal conditions, the BCR(KEAP1) complex mediates ubiquitination and degradation of NFE2L2/NRF2, a transcription factor regulating expression of many cytoprotective genes. In response to oxidative stress, different electrophile metabolites trigger non-enzymatic covalent modifications of highly reactive cysteine residues in KEAP1, leading to inactivate the ubiquitin ligase activity of the BCR(KEAP1) complex, promoting NFE2L2/NRF2 nuclear accumulation and expression of phase II detoxifying enzymes. In response to selective autophagy, KEAP1 is sequestered in inclusion bodies following its interaction with SQSTM1/p62, leading to inactivation of the BCR(KEAP1) complex and activation of NFE2L2/NRF2. The BCR(KEAP1) complex also mediates ubiquitination of SQSTM1/p62, increasing SQSTM1/p62 sequestering activity and degradation. The BCR(KEAP1) complex also targets BPTF and PGAM5 for ubiquitination and degradation by the proteasome. The sequence is that of Kelch-like ECH-associated protein 1 from Pongo abelii (Sumatran orangutan).